The following is a 97-amino-acid chain: YcgL domain-containing protein Pmen_1774 (97 aa).

In terms of domain architecture, YcgL spans 3–87 (RICSIYKSPR…PEEDYIQHLP (85 aa)).

The polypeptide is YcgL domain-containing protein Pmen_1774 (Ectopseudomonas mendocina (strain ymp) (Pseudomonas mendocina)).